Here is a 189-residue protein sequence, read N- to C-terminus: Elongation factor P (189 aa).

Lys34 bears the N6-(3,6-diaminohexanoyl)-5-hydroxylysine mark.

Belongs to the elongation factor P family. In terms of processing, may be beta-lysylated on the epsilon-amino group of Lys-34 by the combined action of EpmA and EpmB, and then hydroxylated on the C5 position of the same residue by EpmC (if this protein is present). Lysylation is critical for the stimulatory effect of EF-P on peptide-bond formation. The lysylation moiety may extend toward the peptidyltransferase center and stabilize the terminal 3-CCA end of the tRNA. Hydroxylation of the C5 position on Lys-34 may allow additional potential stabilizing hydrogen-bond interactions with the P-tRNA.

It is found in the cytoplasm. It functions in the pathway protein biosynthesis; polypeptide chain elongation. Functionally, involved in peptide bond synthesis. Alleviates ribosome stalling that occurs when 3 or more consecutive Pro residues or the sequence PPG is present in a protein, possibly by augmenting the peptidyl transferase activity of the ribosome. Modification of Lys-34 is required for alleviation. The sequence is that of Elongation factor P from Francisella philomiragia subsp. philomiragia (strain ATCC 25017 / CCUG 19701 / FSC 153 / O#319-036).